The primary structure comprises 392 residues: L-lactate dehydrogenase (392 aa).

In terms of domain architecture, FMN hydroxy acid dehydrogenase spans 1 to 380 (MIISASTDYR…GSDSLVTGSA (380 aa)). Tyrosine 24 provides a ligand contact to substrate. FMN is bound by residues serine 106 and glutamine 127. Residue tyrosine 129 coordinates substrate. Threonine 155 contributes to the FMN binding site. Arginine 164 serves as a coordination point for substrate. Lysine 251 is an FMN binding site. Histidine 275 serves as the catalytic Proton acceptor. Residue arginine 278 coordinates substrate. Position 306–330 (306–330 (DSGVRNGLDVVRMIAMGADTILLGR)) interacts with FMN.

It belongs to the FMN-dependent alpha-hydroxy acid dehydrogenase family. Requires FMN as cofactor.

It localises to the cell inner membrane. It catalyses the reaction (S)-lactate + A = pyruvate + AH2. In terms of biological role, catalyzes the conversion of L-lactate to pyruvate. Is coupled to the respiratory chain. The polypeptide is L-lactate dehydrogenase (Chromohalobacter salexigens (strain ATCC BAA-138 / DSM 3043 / CIP 106854 / NCIMB 13768 / 1H11)).